The sequence spans 398 residues: ATP-dependent RNA helicase eIF4A (398 aa).

The short motif at 25–53 is the Q motif element; sequence DSFDSMDLKPELLRGIYAYGFERPSAIQQ. One can recognise a Helicase ATP-binding domain in the interval 56–226; that stretch reads IMPIIKGSDV…TKFMRDPVRI (171 aa). 69 to 76 contacts ATP; sequence AQSGTGKT. The short motif at 174–177 is the DEAD box element; sequence DEAD. One can recognise a Helicase C-terminal domain in the interval 237–398; that stretch reads GIKQFYIAVE…EMPMNVADLI (162 aa).

It belongs to the DEAD box helicase family. eIF4A subfamily. In terms of assembly, component of the eIF4F complex, which composition varies with external and internal environmental conditions. It is composed of at least eIF4A, eIF4E and eIF4G.

It localises to the cytoplasm. It catalyses the reaction ATP + H2O = ADP + phosphate + H(+). Functionally, ATP-dependent RNA helicase which is a subunit of the eIF4F complex involved in cap recognition and is required for mRNA binding to ribosome. In the current model of translation initiation, eIF4A unwinds RNA secondary structures in the 5'-UTR of mRNAs which is necessary to allow efficient binding of the small ribosomal subunit, and subsequent scanning for the initiator codon. In Aspergillus clavatus (strain ATCC 1007 / CBS 513.65 / DSM 816 / NCTC 3887 / NRRL 1 / QM 1276 / 107), this protein is ATP-dependent RNA helicase eIF4A (tif1).